We begin with the raw amino-acid sequence, 92 residues long: Putative pterin-4-alpha-carbinolamine dehydratase (92 aa).

It belongs to the pterin-4-alpha-carbinolamine dehydratase family.

The enzyme catalyses (4aS,6R)-4a-hydroxy-L-erythro-5,6,7,8-tetrahydrobiopterin = (6R)-L-erythro-6,7-dihydrobiopterin + H2O. The sequence is that of Putative pterin-4-alpha-carbinolamine dehydratase from Natronomonas pharaonis (strain ATCC 35678 / DSM 2160 / CIP 103997 / JCM 8858 / NBRC 14720 / NCIMB 2260 / Gabara) (Halobacterium pharaonis).